The sequence spans 120 residues: NAD(P)H-quinone oxidoreductase subunit 3, chloroplastic (120 aa).

Helical transmembrane passes span 9 to 29, 64 to 84, and 88 to 108; these read IFWA…LISG, MFAL…PWAM, and VLGV…IVGS.

Belongs to the complex I subunit 3 family. NDH is composed of at least 16 different subunits, 5 of which are encoded in the nucleus.

It is found in the plastid. Its subcellular location is the chloroplast thylakoid membrane. It catalyses the reaction a plastoquinone + NADH + (n+1) H(+)(in) = a plastoquinol + NAD(+) + n H(+)(out). It carries out the reaction a plastoquinone + NADPH + (n+1) H(+)(in) = a plastoquinol + NADP(+) + n H(+)(out). Its function is as follows. NDH shuttles electrons from NAD(P)H:plastoquinone, via FMN and iron-sulfur (Fe-S) centers, to quinones in the photosynthetic chain and possibly in a chloroplast respiratory chain. The immediate electron acceptor for the enzyme in this species is believed to be plastoquinone. Couples the redox reaction to proton translocation, and thus conserves the redox energy in a proton gradient. This Phaseolus vulgaris (Kidney bean) protein is NAD(P)H-quinone oxidoreductase subunit 3, chloroplastic.